The chain runs to 307 residues: MTKKMGLLVVAYGTPYKESDIEPYYTDIRHGKRPSEEELQDLKDRYEFIGGLSPLAGTTDDQADALVSALNKAYADVEFKLYLGLKHISPFIEDAVEQMHKDGITEAITVVLAPHYSSFSVGSYDKRADEEAAKYGIQLTHVKHYYEQPKFIEYWTNKVNETLAQIPEEEHKDTVLVVSAHSLPKGLIEKNNDPYPQELEHTALLIKEQSNIEHIAIGWQSEGNTGTPWLGPDVQDLTRDLYEKHQYKNFIYTPVGFVCEHLEVLYDNDYECKVVCDDIGANYYRPKMPNTHPLFIGAIVDEIKSIF.

Residues Tyr12, Arg29, 45–46, Ser53, and Tyr124 each bind Fe-coproporphyrin III; that span reads RY. Residues His181 and Glu263 each coordinate Fe(2+).

Belongs to the ferrochelatase family.

The protein resides in the cytoplasm. The catalysed reaction is Fe-coproporphyrin III + 2 H(+) = coproporphyrin III + Fe(2+). It participates in porphyrin-containing compound metabolism; protoheme biosynthesis. Its function is as follows. Involved in coproporphyrin-dependent heme b biosynthesis. Catalyzes the insertion of ferrous iron into coproporphyrin III to form Fe-coproporphyrin III. This Staphylococcus aureus (strain MRSA252) protein is Coproporphyrin III ferrochelatase.